Consider the following 1453-residue polypeptide: DNA-directed RNA polymerase IV subunit 1 (1453 aa).

7 residues coordinate Zn(2+): C56, C59, C67, H70, C97, C100, and C121. Mg(2+) is bound by residues D447, D449, and D451. The bridging helix stretch occupies residues 806 to 818 (PLESFVHSVTSRD).

It belongs to the RNA polymerase beta' chain family. In terms of assembly, component of the RNA polymerase IV complex. Interacts with NRPD2, NRPD3, NRPD3B, NRPD4, NRPD5, NRPD5B, NRPD6A, NRPD7, NRPD7B, NRPD9A, NRPD9B, NRPD10, NRPD11, NRPD12, RDR2, RDM4, CLSY1, CLSY2, CLSY3, CLSY4 and SHH1. As to expression, mostly expressed in flowers, and, to a lower extent, in leaves.

It is found in the nucleus. The catalysed reaction is RNA(n) + a ribonucleoside 5'-triphosphate = RNA(n+1) + diphosphate. Functionally, DNA-dependent RNA polymerase catalyzes the transcription of DNA into RNA using the four ribonucleoside triphosphates as substrates. Largest and catalytic component of RNA polymerase IV which mediates 24-nt short-interfering RNAs (siRNA) accumulation. Implicated in siRNA-directed heterochromatin formation through the action of DCL3 and AGO4, and subsequent DNA methylation-dependent silencing of targeted sequences. Essential component of a self-reinforcing loop coupling de novo DNA methylation to siRNA production. Required for intercellular but not intracellular RNA interference (RNAi) leading to systemic post-transcriptional gene silencing. Involved in the maintenance of post-transcriptional RNA silencing. This chain is DNA-directed RNA polymerase IV subunit 1 (NRPD1), found in Arabidopsis thaliana (Mouse-ear cress).